The following is a 208-amino-acid chain: Small ribosomal subunit protein uS4 (208 aa).

One can recognise an S4 RNA-binding domain in the interval 98–161; the sequence is TRLDNTVYRL…RKIPVIAEAQ (64 aa).

Belongs to the universal ribosomal protein uS4 family. Part of the 30S ribosomal subunit. Contacts protein S5. The interaction surface between S4 and S5 is involved in control of translational fidelity.

Functionally, one of the primary rRNA binding proteins, it binds directly to 16S rRNA where it nucleates assembly of the body of the 30S subunit. With S5 and S12 plays an important role in translational accuracy. The protein is Small ribosomal subunit protein uS4 of Maridesulfovibrio salexigens (strain ATCC 14822 / DSM 2638 / NCIMB 8403 / VKM B-1763) (Desulfovibrio salexigens).